The following is a 358-amino-acid chain: Peptide chain release factor 1 (358 aa).

Q237 carries the post-translational modification N5-methylglutamine.

This sequence belongs to the prokaryotic/mitochondrial release factor family. Methylated by PrmC. Methylation increases the termination efficiency of RF1.

It localises to the cytoplasm. Peptide chain release factor 1 directs the termination of translation in response to the peptide chain termination codons UAG and UAA. The polypeptide is Peptide chain release factor 1 (Streptomyces coelicolor (strain ATCC BAA-471 / A3(2) / M145)).